The primary structure comprises 298 residues: Acetylglutamate kinase (298 aa).

Substrate contacts are provided by residues 69–70 (GG), arginine 91, and asparagine 196.

This sequence belongs to the acetylglutamate kinase family. ArgB subfamily.

The protein resides in the cytoplasm. The enzyme catalyses N-acetyl-L-glutamate + ATP = N-acetyl-L-glutamyl 5-phosphate + ADP. It functions in the pathway amino-acid biosynthesis; L-arginine biosynthesis; N(2)-acetyl-L-ornithine from L-glutamate: step 2/4. Its function is as follows. Catalyzes the ATP-dependent phosphorylation of N-acetyl-L-glutamate. The sequence is that of Acetylglutamate kinase from Rhodopseudomonas palustris (strain ATCC BAA-98 / CGA009).